We begin with the raw amino-acid sequence, 147 residues long: Small ribosomal subunit protein bS16 (147 aa).

Positions 89–147 are disordered; the sequence is AWTHGNNPKKAEPGKKAQERAKERADKAEAKAAAAAEAAAAPAEEAPAEAAPAEETSES. Positions 97–118 are enriched in basic and acidic residues; the sequence is KKAEPGKKAQERAKERADKAEA. Over residues 119 to 147 the composition is skewed to low complexity; that stretch reads KAAAAAEAAAAPAEEAPAEAAPAEETSES.

It belongs to the bacterial ribosomal protein bS16 family.

This Hyphomonas neptunium (strain ATCC 15444) protein is Small ribosomal subunit protein bS16.